We begin with the raw amino-acid sequence, 345 residues long: Anthranilate phosphoribosyltransferase (345 aa).

5-phospho-alpha-D-ribose 1-diphosphate contacts are provided by residues Gly88, 91–92 (GD), Thr96, 98–101 (NIST), 116–124 (KHGNRSASG), and Ser128. Residue Gly88 coordinates anthranilate. Ser100 serves as a coordination point for Mg(2+). Asn119 is a binding site for anthranilate. Arg174 serves as a coordination point for anthranilate. 2 residues coordinate Mg(2+): Asp233 and Glu234.

This sequence belongs to the anthranilate phosphoribosyltransferase family. As to quaternary structure, homodimer. It depends on Mg(2+) as a cofactor.

It catalyses the reaction N-(5-phospho-beta-D-ribosyl)anthranilate + diphosphate = 5-phospho-alpha-D-ribose 1-diphosphate + anthranilate. The protein operates within amino-acid biosynthesis; L-tryptophan biosynthesis; L-tryptophan from chorismate: step 2/5. Functionally, catalyzes the transfer of the phosphoribosyl group of 5-phosphorylribose-1-pyrophosphate (PRPP) to anthranilate to yield N-(5'-phosphoribosyl)-anthranilate (PRA). The chain is Anthranilate phosphoribosyltransferase from Prochlorococcus marinus (strain NATL1A).